A 126-amino-acid polypeptide reads, in one-letter code: Large ribosomal subunit protein bL12 (126 aa).

This sequence belongs to the bacterial ribosomal protein bL12 family. In terms of assembly, homodimer. Part of the ribosomal stalk of the 50S ribosomal subunit. Forms a multimeric L10(L12)X complex, where L10 forms an elongated spine to which 2 to 4 L12 dimers bind in a sequential fashion. Binds GTP-bound translation factors.

Its function is as follows. Forms part of the ribosomal stalk which helps the ribosome interact with GTP-bound translation factors. Is thus essential for accurate translation. The polypeptide is Large ribosomal subunit protein bL12 (Bordetella avium (strain 197N)).